Reading from the N-terminus, the 404-residue chain is Trigger factor (404 aa).

Positions 160–225 constitute a PPIase FKBP-type domain; the sequence is KDHLFVRTEE…VLEVKTLKLP (66 aa).

The protein belongs to the FKBP-type PPIase family. Tig subfamily.

It localises to the cytoplasm. It carries out the reaction [protein]-peptidylproline (omega=180) = [protein]-peptidylproline (omega=0). In terms of biological role, involved in protein export. Acts as a chaperone by maintaining the newly synthesized protein in an open conformation. Functions as a peptidyl-prolyl cis-trans isomerase. In Thermus thermophilus (strain ATCC 27634 / DSM 579 / HB8), this protein is Trigger factor.